The primary structure comprises 381 residues: Alkanesulfonate monooxygenase (381 aa).

Belongs to the SsuD family. In terms of assembly, homotetramer.

The catalysed reaction is an alkanesulfonate + FMNH2 + O2 = an aldehyde + FMN + sulfite + H2O + 2 H(+). Its function is as follows. Catalyzes the desulfonation of aliphatic sulfonates. In Escherichia coli O17:K52:H18 (strain UMN026 / ExPEC), this protein is Alkanesulfonate monooxygenase.